The sequence spans 267 residues: MNKKNIKTTSSVSLDNVSIRYGNSVAVKNVFCDIEKNQVTSFIGPSGCGKSTVIRAINRMNDLIEGCKLSGSVIFEGIDIYAEDIDPVEVRRRIGMVFQQPNPFPKSIYENIAFGARVNGYKGNMDQLVEESLTKAAVWDECKDKLNESGYSLSGGQQQRLCIARTIAIEPDVILMDEPCSALDPLSTLKIEETIHELKKNFTIIIVTHNMQQANRVSDYTAFFNTEKKDKDLGGKIGFLVEFDKTKNMFNSPKQKSTQDYISGKFG.

The ABC transporter domain maps to 12–251 (VSLDNVSIRY…EFDKTKNMFN (240 aa)). Position 44–51 (44–51 (GPSGCGKS)) interacts with ATP.

This sequence belongs to the ABC transporter superfamily. Phosphate importer (TC 3.A.1.7) family. As to quaternary structure, the complex is composed of two ATP-binding proteins (PstB), two transmembrane proteins (PstC and PstA) and a solute-binding protein (PstS).

The protein resides in the cell inner membrane. The catalysed reaction is phosphate(out) + ATP + H2O = ADP + 2 phosphate(in) + H(+). Part of the ABC transporter complex PstSACB involved in phosphate import. Responsible for energy coupling to the transport system. The polypeptide is Phosphate import ATP-binding protein PstB (Prochlorococcus marinus (strain NATL2A)).